A 395-amino-acid polypeptide reads, in one-letter code: MAKAKFERTKPHVNIGTIGHVDHGKTTLTAAITTVLAKQGKAEARAYDQIDAAPEERERGITISTAHVEYETDNRHYAHVDCPGHADYVKNMITGAAQMDGAILVVSAADGPMPQTREHILLSRQVGVPYIVVFLNKCDMVDDEELLELVEMEVRDLLSEYDFPGDEVPVIKGSALKALEGDPAWEAKIIELMNAVDEYIPTPQREVDKPFMMPVEDVFSITGRGTVATGRVERGILKVGDQVEIIGLSEEPKATTVTGVEMFRKLLDQAEAGDNIGALLRGVSRDEVQRGQVLAKPGTITPHTKFKAQVYVLTKEEGGRHTPFFSNYRPQFYFRTTDVTGIIQLPEGVEMVMPGDNIEMTVELIAPIAIEEGTKFSIREGGRTVGAGSVSEIIE.

Residues 10 to 204 (KPHVNIGTIG…AVDEYIPTPQ (195 aa)) form the tr-type G domain. The G1 stretch occupies residues 19 to 26 (GHVDHGKT). GTP is bound at residue 19–26 (GHVDHGKT). T26 is a binding site for Mg(2+). The interval 60-64 (GITIS) is G2. The tract at residues 81-84 (DCPG) is G3. GTP is bound by residues 81–85 (DCPGH) and 136–139 (NKCD). The segment at 136–139 (NKCD) is G4. The tract at residues 174-176 (SAL) is G5.

This sequence belongs to the TRAFAC class translation factor GTPase superfamily. Classic translation factor GTPase family. EF-Tu/EF-1A subfamily. As to quaternary structure, monomer.

The protein resides in the cytoplasm. The enzyme catalyses GTP + H2O = GDP + phosphate + H(+). GTP hydrolase that promotes the GTP-dependent binding of aminoacyl-tRNA to the A-site of ribosomes during protein biosynthesis. This Anoxybacillus flavithermus (strain DSM 21510 / WK1) protein is Elongation factor Tu.